The sequence spans 352 residues: Probable protein kinase DDB_G0291842 (352 aa).

The disordered stretch occupies residues 1-57; it reads MRPLPDQSAFEDKSELVSKKQKNEDENNENRSPETPRTPKVCPKTPTKTPLRTPTKN. The span at 10–34 shows a compositional bias: basic and acidic residues; sequence FEDKSELVSKKQKNEDENNENRSPE. Residues 38-56 are compositionally biased toward low complexity; sequence TPKVCPKTPTKTPLRTPTK. One can recognise a Protein kinase domain in the interval 77–331; sequence FEYINQIGEG…IQSLLKYDKL (255 aa). Residues 83-91 and K106 each bind ATP; that span reads IGEGSFAKV. The active-site Proton acceptor is the D207. Mg(2+) is bound by residues N212 and D225.

This sequence belongs to the protein kinase superfamily. Ser/Thr protein kinase family. WEE1 subfamily.

The catalysed reaction is L-seryl-[protein] + ATP = O-phospho-L-seryl-[protein] + ADP + H(+). The enzyme catalyses L-threonyl-[protein] + ATP = O-phospho-L-threonyl-[protein] + ADP + H(+). In Dictyostelium discoideum (Social amoeba), this protein is Probable protein kinase DDB_G0291842.